Here is a 198-residue protein sequence, read N- to C-terminus: Recombination protein RecR (198 aa).

A C4-type zinc finger spans residues 57–72; that stretch reads CSVCGHITENDPCYIC. The Toprim domain maps to 80–175; sequence SVICVVEDDK…KVTRLAQGLS (96 aa).

The protein belongs to the RecR family.

In terms of biological role, may play a role in DNA repair. It seems to be involved in an RecBC-independent recombinational process of DNA repair. It may act with RecF and RecO. The polypeptide is Recombination protein RecR (Staphylococcus aureus (strain Mu3 / ATCC 700698)).